The primary structure comprises 339 residues: Protein LicA (339 aa).

A run of 9 repeats spans residues isoleucine 4 to serine 7, isoleucine 8 to serine 11, isoleucine 12 to serine 15, isoleucine 16 to serine 19, isoleucine 20 to serine 23, isoleucine 24 to serine 27, isoleucine 28 to serine 31, isoleucine 32 to serine 35, and isoleucine 36 to serine 39. The segment at isoleucine 4–serine 39 is 9 X 4 AA tandem repeats of I-N-Q-S.

The protein belongs to the peptidase S49 family.

Mediates phase variation of the LOS 6A2 and 12D9 epitopes. Phase variation of H.influenza LOS epitopes expressed by LicA is determined by a translational switch. The polypeptide is Protein LicA (licA) (Haemophilus influenzae).